The chain runs to 407 residues: Phosphoglycerate kinase (407 aa).

Residues 24–26 (DIN), arginine 39, 60–63 (HQSR), arginine 117, and arginine 157 contribute to the substrate site. Residues glutamate 330 and 355 to 358 (GGHI) each bind ATP.

This sequence belongs to the phosphoglycerate kinase family.

It localises to the cytoplasm. It catalyses the reaction (2R)-3-phosphoglycerate + ATP = (2R)-3-phospho-glyceroyl phosphate + ADP. It functions in the pathway carbohydrate degradation; glycolysis; pyruvate from D-glyceraldehyde 3-phosphate: step 2/5. The chain is Phosphoglycerate kinase (pgk) from Archaeoglobus fulgidus (strain ATCC 49558 / DSM 4304 / JCM 9628 / NBRC 100126 / VC-16).